Reading from the N-terminus, the 227-residue chain is Tegument protein ORF55 (227 aa).

The S-palmitoyl cysteine; by host moiety is linked to residue Cys-11. The interval 183-227 (VTRQPEATLPKPPTEDPSVSAMHSSIPPRPSSTLEETTESAIGST) is disordered. Polar residues predominate over residues 213-227 (SSTLEETTESAIGST).

This sequence belongs to the herpesviridae UL51 family. In terms of assembly, oligomerizes. Interacts with ORF42; this interaction mediates ORF42 incorporation to virions. Interacts with vBCL2. Post-translationally, phosphorylated. In terms of processing, palmitoylation is necessary for Golgi localization.

It is found in the virion tegument. It localises to the host cytoplasm. The protein resides in the host Golgi apparatus. Functionally, plays several roles during the time course of infection, including egress of virus particles from the perinuclear space and secondary envelopment of cytoplasmic capsids that bud into specific trans-Golgi network (TGN)-derived membranes. In Homo sapiens (Human), this protein is Tegument protein ORF55 (ORF55).